We begin with the raw amino-acid sequence, 298 residues long: ATP synthase gamma chain (298 aa).

It belongs to the ATPase gamma chain family. F-type ATPases have 2 components, CF(1) - the catalytic core - and CF(0) - the membrane proton channel. CF(1) has five subunits: alpha(3), beta(3), gamma(1), delta(1), epsilon(1). CF(0) has three main subunits: a, b and c.

Its subcellular location is the cell membrane. Produces ATP from ADP in the presence of a proton gradient across the membrane. The gamma chain is believed to be important in regulating ATPase activity and the flow of protons through the CF(0) complex. The sequence is that of ATP synthase gamma chain from Mycobacterium leprae (strain Br4923).